The following is a 476-amino-acid chain: Bifunctional protein HldE (476 aa).

Residues Met1–Ser319 are ribokinase. Asn195–Glu198 serves as a coordination point for ATP. Asp264 is a catalytic residue. The segment at Met345–Gln476 is cytidylyltransferase.

In the N-terminal section; belongs to the carbohydrate kinase PfkB family. It in the C-terminal section; belongs to the cytidylyltransferase family. In terms of assembly, homodimer.

It carries out the reaction D-glycero-beta-D-manno-heptose 7-phosphate + ATP = D-glycero-beta-D-manno-heptose 1,7-bisphosphate + ADP + H(+). The catalysed reaction is D-glycero-beta-D-manno-heptose 1-phosphate + ATP + H(+) = ADP-D-glycero-beta-D-manno-heptose + diphosphate. It functions in the pathway nucleotide-sugar biosynthesis; ADP-L-glycero-beta-D-manno-heptose biosynthesis; ADP-L-glycero-beta-D-manno-heptose from D-glycero-beta-D-manno-heptose 7-phosphate: step 1/4. It participates in nucleotide-sugar biosynthesis; ADP-L-glycero-beta-D-manno-heptose biosynthesis; ADP-L-glycero-beta-D-manno-heptose from D-glycero-beta-D-manno-heptose 7-phosphate: step 3/4. Its function is as follows. Catalyzes the phosphorylation of D-glycero-D-manno-heptose 7-phosphate at the C-1 position to selectively form D-glycero-beta-D-manno-heptose-1,7-bisphosphate. Functionally, catalyzes the ADP transfer from ATP to D-glycero-beta-D-manno-heptose 1-phosphate, yielding ADP-D-glycero-beta-D-manno-heptose. This Shewanella sediminis (strain HAW-EB3) protein is Bifunctional protein HldE.